The following is a 225-amino-acid chain: Protein-L-isoaspartate O-methyltransferase (225 aa).

The active site involves serine 75.

This sequence belongs to the methyltransferase superfamily. L-isoaspartyl/D-aspartyl protein methyltransferase family.

The protein localises to the cytoplasm. The enzyme catalyses [protein]-L-isoaspartate + S-adenosyl-L-methionine = [protein]-L-isoaspartate alpha-methyl ester + S-adenosyl-L-homocysteine. Catalyzes the methyl esterification of L-isoaspartyl residues in peptides and proteins that result from spontaneous decomposition of normal L-aspartyl and L-asparaginyl residues. It plays a role in the repair and/or degradation of damaged proteins. This Xanthomonas oryzae pv. oryzae (strain PXO99A) protein is Protein-L-isoaspartate O-methyltransferase.